The following is a 385-amino-acid chain: Meiotic recombination protein SPO11-2 (385 aa).

Residues 24-169 (LPPAEVRARI…LGIMASSRGA (146 aa)) enclose the Topo IIA-type catalytic domain. The active-site O-(5'-phospho-DNA)-tyrosine intermediate is Tyr126. Mg(2+)-binding residues include Glu219 and Asp272.

It belongs to the TOP6A family. Interacts with TOP6B. The cofactor is Mg(2+). Highly expressed in flowers before pollination. Expressed in roots and shoots.

The protein localises to the nucleus. It carries out the reaction ATP-dependent breakage, passage and rejoining of double-stranded DNA.. Functionally, required for meiotic recombination. Mediates DNA cleavage that forms the double-strand breaks (DSB) that initiate meiotic recombination. The chain is Meiotic recombination protein SPO11-2 (SPO11-2) from Oryza sativa subsp. indica (Rice).